A 377-amino-acid polypeptide reads, in one-letter code: Formate dehydrogenase, mitochondrial (377 aa).

The transit peptide at 1 to 29 directs the protein to the mitochondrion; it reads MAAMWRAAARQLVDRAVGSRAAHTSAGSK. Residues Ile-121 and Asn-145 each contribute to the substrate site. Residues Thr-146, Asp-220, 255-259, Asn-281, Asp-307, and 331-334 each bind NAD(+); these read PLTEK and HISG.

Belongs to the D-isomer specific 2-hydroxyacid dehydrogenase family. FDH subfamily. As to quaternary structure, homodimer.

It is found in the mitochondrion. It carries out the reaction formate + NAD(+) = CO2 + NADH. Functionally, catalyzes the NAD(+)-dependent oxidation of formate to carbon dioxide. Involved in the cell stress response. The sequence is that of Formate dehydrogenase, mitochondrial from Hordeum vulgare (Barley).